We begin with the raw amino-acid sequence, 158 residues long: Protein Smg homolog (158 aa).

It belongs to the Smg family.

This is Protein Smg homolog from Herminiimonas arsenicoxydans.